The chain runs to 294 residues: N-acetylmuramic acid 6-phosphate etherase (294 aa).

Residues 56-219 (TSYSLRNGGR…STLSMVSVGK (164 aa)) form the SIS domain. Glutamate 84 acts as the Proton donor in catalysis. The active site involves glutamate 115.

Belongs to the GCKR-like family. MurNAc-6-P etherase subfamily. In terms of assembly, homodimer.

The catalysed reaction is N-acetyl-D-muramate 6-phosphate + H2O = N-acetyl-D-glucosamine 6-phosphate + (R)-lactate. The protein operates within amino-sugar metabolism; 1,6-anhydro-N-acetylmuramate degradation. It functions in the pathway amino-sugar metabolism; N-acetylmuramate degradation. It participates in cell wall biogenesis; peptidoglycan recycling. In terms of biological role, specifically catalyzes the cleavage of the D-lactyl ether substituent of MurNAc 6-phosphate, producing GlcNAc 6-phosphate and D-lactate. Together with AnmK, is also required for the utilization of anhydro-N-acetylmuramic acid (anhMurNAc) either imported from the medium or derived from its own cell wall murein, and thus plays a role in cell wall recycling. This is N-acetylmuramic acid 6-phosphate etherase from Francisella tularensis subsp. tularensis (strain SCHU S4 / Schu 4).